Reading from the N-terminus, the 323-residue chain is tRNA U34 carboxymethyltransferase (323 aa).

Carboxy-S-adenosyl-L-methionine-binding positions include K91, W105, K110, G130, 152–154 (DPT), 181–182 (IE), M196, Y200, and R315.

This sequence belongs to the class I-like SAM-binding methyltransferase superfamily. CmoB family. In terms of assembly, homotetramer.

It catalyses the reaction carboxy-S-adenosyl-L-methionine + 5-hydroxyuridine(34) in tRNA = 5-carboxymethoxyuridine(34) in tRNA + S-adenosyl-L-homocysteine + H(+). Catalyzes carboxymethyl transfer from carboxy-S-adenosyl-L-methionine (Cx-SAM) to 5-hydroxyuridine (ho5U) to form 5-carboxymethoxyuridine (cmo5U) at position 34 in tRNAs. The sequence is that of tRNA U34 carboxymethyltransferase from Shigella flexneri serotype 5b (strain 8401).